Reading from the N-terminus, the 402-residue chain is Putative RNA-guided DNA endonuclease InsQ (402 aa).

Active-site residues include Asp183 and Glu267. Residues Cys334, Cys337, Cys353, and Cys356 each contribute to the Zn(2+) site. Asp363 is an active-site residue.

In the N-terminal section; belongs to the transposase 2 family. It in the C-terminal section; belongs to the transposase 35 family.

Its function is as follows. An RNA-guided dsDNA endonuclease. When guided by an RNA derived from the right-end element of its insertion sequence element (IS), cleaves DNA downstream of the transposon-associated motif (TAM). Cleaves supercoiled and linear DNA in a staggered manner 15-21 bases from the TAM yielding 5'-overhangs. Binds reRNA, an approximately 150 nucleotide base sRNA derived from the 3' end of its own gene, the right end (RE) of the insertion sequence (IS) plus sequence downstream of the IS. Not required for transposition of the insertion element. The corresponding transposase in strains MG1655 and W3110 is a truncated pseudogene (yncK). The chain is Putative RNA-guided DNA endonuclease InsQ (insQ) from Escherichia coli (strain K12).